The following is a 133-amino-acid chain: Ribosomal RNA large subunit methyltransferase H 1 (133 aa).

S-adenosyl-L-methionine contacts are provided by residues Ile55, Gly89, and 101-106 (ISPMEM).

This sequence belongs to the RNA methyltransferase RlmH family. Homodimer.

The protein localises to the cytoplasm. It catalyses the reaction pseudouridine(1915) in 23S rRNA + S-adenosyl-L-methionine = N(3)-methylpseudouridine(1915) in 23S rRNA + S-adenosyl-L-homocysteine + H(+). In terms of biological role, specifically methylates the pseudouridine at position 1915 (m3Psi1915) in 23S rRNA. This is Ribosomal RNA large subunit methyltransferase H 1 from Thermoanaerobacter sp. (strain X514).